A 205-amino-acid chain; its full sequence is 3-isopropylmalate dehydratase small subunit (205 aa).

It belongs to the LeuD family. LeuD type 1 subfamily. As to quaternary structure, heterodimer of LeuC and LeuD.

The enzyme catalyses (2R,3S)-3-isopropylmalate = (2S)-2-isopropylmalate. It participates in amino-acid biosynthesis; L-leucine biosynthesis; L-leucine from 3-methyl-2-oxobutanoate: step 2/4. Functionally, catalyzes the isomerization between 2-isopropylmalate and 3-isopropylmalate, via the formation of 2-isopropylmaleate. The chain is 3-isopropylmalate dehydratase small subunit from Christiangramia forsetii (strain DSM 17595 / CGMCC 1.15422 / KT0803) (Gramella forsetii).